A 622-amino-acid chain; its full sequence is Pesticidal crystal protein Cry2Ac (622 aa).

Belongs to the delta endotoxin family.

Its function is as follows. Promotes colloidosmotic lysis by binding to the midgut epithelial cells of lepidopteran larvae. Has low activity on dipteran larvae. The chain is Pesticidal crystal protein Cry2Ac (cry2Ac) from Bacillus thuringiensis.